The primary structure comprises 400 residues: MIIKPKIRGFICTTTHPVGCEANVKEQIAYTKAQGPIKNAPKRVLVVGASSGYGLSSRIAAAFGGGAATIGVFFEKEGSEKKPGTAGFYNAAAFEKLAREEGLYAKSLNGDAFSNEAKQKTIDLIKEDLGQVDMVVYSLASPVRKLPETGELIRSALKPIGQTYTSTAVDTNKDIIIEASVEPATEQEIQDTVTVMGGEDWELWINALAEAGVLAEGCKTVAYSYIGTELTWPIYWDGALGKAKMDLDRAASALNDKLSATGGSANVAVLKSVVTQASSAIPVMPLYIAMVFKKMREEGVHEGCMEQIYRMFSQRLYKEDGSAAEVDEKNRLRLDDWELRDDIQEHCRNLWPQITTENLKELTDYVEYKEEFLKLFGFGIDGVDYEADVNPDVATDFIAI.

NAD(+) is bound by residues 48-53, 74-75, 111-112, and 139-140; these read GASSGY, FE, DA, and LA. Residue tyrosine 225 participates in substrate binding. Residue tyrosine 235 is the Proton donor of the active site. NAD(+) contacts are provided by residues lysine 244 and 273-275; that span reads VVT.

Belongs to the TER reductase family. Monomer.

The enzyme catalyses a 2,3-saturated acyl-[ACP] + NAD(+) = a (2E)-enoyl-[ACP] + NADH + H(+). The protein operates within lipid metabolism; fatty acid biosynthesis. Involved in the final reduction of the elongation cycle of fatty acid synthesis (FAS II). Catalyzes the reduction of a carbon-carbon double bond in an enoyl moiety that is covalently linked to an acyl carrier protein (ACP). This chain is Enoyl-[acyl-carrier-protein] reductase [NADH] 1, found in Vibrio vulnificus (strain YJ016).